We begin with the raw amino-acid sequence, 318 residues long: 2-keto-3-deoxygluconate permease (318 aa).

Transmembrane regions (helical) follow at residues 10-30, 42-62, 82-102, 109-129, 139-159, 163-183, 201-221, 224-244, 257-277, and 288-308; these read LPGGMMLVPLLLGALCHTLWP, GLISGTVPILAVWFFCMGATI, IAVAWLVAVVCAPLLPIGGIP, LSVLALVAAMDMTNGGLYAAL, AGAVVLMSLESGPLISMLILG, LATFEPQLFVGAVLPLLLGFA, TLVPFFGFALGNTLDLSTIVH, ASGVLLGVAVIVITGLPLLLA, VAASSTAGAAVATPALIAGMA, and TALVASAVIVTSVLVPLLTAL.

It belongs to the KdgT transporter family.

It localises to the cell inner membrane. It catalyses the reaction 2-dehydro-3-deoxy-D-gluconate(in) + H(+)(in) = 2-dehydro-3-deoxy-D-gluconate(out) + H(+)(out). In terms of biological role, catalyzes the proton-dependent uptake of 2-keto-3-deoxygluconate (KDG) into the cell. This Xanthomonas oryzae pv. oryzae (strain MAFF 311018) protein is 2-keto-3-deoxygluconate permease.